The sequence spans 474 residues: PRAME family member 10 (474 aa).

One copy of the LRR 1; degenerate repeat lies at 97 to 124 (RWKLQVLDLRDVDENFWTIWSGARVLSC). Residues 179–203 (HLCCSKVQNYSMPTSSFRNLLERIY) form an LRR 2; degenerate repeat. Residues 204–230 (PDSIQELEVWKKCSLNKTGKFAPYLSQ) form an LRR 3; degenerate repeat. The stretch at 231 to 265 (MSNLRELFLAFGYERELYVSVQWPCIPDLDSPFLC) is one LRR 4; degenerate repeat. 5 LRR repeats span residues 266-291 (LYYP…LRYL), 292-323 (KNPL…SQLK), 324-342 (ELRL…PLGV), 348-375 (AATL…ALSH), and 376-400 (CSQL…LLRH).

It belongs to the PRAME family.

The protein is PRAME family member 10 of Homo sapiens (Human).